A 1051-amino-acid polypeptide reads, in one-letter code: Ubiquitin-activating enzyme E1 1 (1051 aa).

2 repeat units span residues 56 to 194 (GRET…GSVF) and 453 to 605 (GSKL…QMVI). The tract at residues 56–605 (GRETMKRLFG…GAKCNTQMVI (550 aa)) is 2 approximate repeats. Residues A472, D498, R509, K522, and 570–571 (DN) contribute to the ATP site. Residue C626 is the Glycyl thioester intermediate of the active site.

Belongs to the ubiquitin-activating E1 family. In terms of assembly, monomer. In terms of processing, the N-terminus is blocked.

The catalysed reaction is ATP + ubiquitin + [E1 ubiquitin-activating enzyme]-L-cysteine = AMP + diphosphate + S-ubiquitinyl-[E1 ubiquitin-activating enzyme]-L-cysteine.. It functions in the pathway protein modification; protein ubiquitination. Functionally, activates ubiquitin by first adenylating its C-terminal glycine residue with ATP, and thereafter linking this residue to the side chain of a cysteine residue in E1, yielding a ubiquitin-E1 thioester and free AMP. The polypeptide is Ubiquitin-activating enzyme E1 1 (Triticum aestivum (Wheat)).